The sequence spans 81 residues: ATP synthase subunit C, plastid (81 aa).

Helical transmembrane passes span 3–23 (PLIP…ASIG) and 61–81 (EALT…NPFI).

This sequence belongs to the ATPase C chain family. As to quaternary structure, F-type ATPases have 2 components, F(1) - the catalytic core - and F(0) - the membrane proton channel. F(1) has five subunits: alpha(3), beta(3), gamma(1), delta(1), epsilon(1). F(0) has four main subunits: a(1), b(1), b'(1) and c(10-14). The alpha and beta chains form an alternating ring which encloses part of the gamma chain. F(1) is attached to F(0) by a central stalk formed by the gamma and epsilon chains, while a peripheral stalk is formed by the delta, b and b' chains.

The protein localises to the plastid membrane. Functionally, f(1)F(0) ATP synthase produces ATP from ADP in the presence of a proton or sodium gradient. F-type ATPases consist of two structural domains, F(1) containing the extramembraneous catalytic core and F(0) containing the membrane proton channel, linked together by a central stalk and a peripheral stalk. During catalysis, ATP synthesis in the catalytic domain of F(1) is coupled via a rotary mechanism of the central stalk subunits to proton translocation. Its function is as follows. Key component of the F(0) channel; it plays a direct role in translocation across the membrane. A homomeric c-ring of between 10-14 subunits forms the central stalk rotor element with the F(1) delta and epsilon subunits. The sequence is that of ATP synthase subunit C, plastid from Aneura mirabilis (Parasitic liverwort).